The sequence spans 100 residues: Large ribosomal subunit protein uL23 (100 aa).

Belongs to the universal ribosomal protein uL23 family. As to quaternary structure, part of the 50S ribosomal subunit. Contacts protein L29, and trigger factor when it is bound to the ribosome.

Its function is as follows. One of the early assembly proteins it binds 23S rRNA. One of the proteins that surrounds the polypeptide exit tunnel on the outside of the ribosome. Forms the main docking site for trigger factor binding to the ribosome. The polypeptide is Large ribosomal subunit protein uL23 (Shewanella oneidensis (strain ATCC 700550 / JCM 31522 / CIP 106686 / LMG 19005 / NCIMB 14063 / MR-1)).